Here is a 287-residue protein sequence, read N- to C-terminus: ATP synthase gamma chain (287 aa).

It belongs to the ATPase gamma chain family. In terms of assembly, F-type ATPases have 2 components, CF(1) - the catalytic core - and CF(0) - the membrane proton channel. CF(1) has five subunits: alpha(3), beta(3), gamma(1), delta(1), epsilon(1). CF(0) has three main subunits: a, b and c.

It is found in the cell inner membrane. Functionally, produces ATP from ADP in the presence of a proton gradient across the membrane. The gamma chain is believed to be important in regulating ATPase activity and the flow of protons through the CF(0) complex. The sequence is that of ATP synthase gamma chain from Xanthomonas axonopodis pv. citri (strain 306).